The primary structure comprises 68 residues: UPF0435 protein Sca_1453 (68 aa).

It belongs to the UPF0435 family.

The polypeptide is UPF0435 protein Sca_1453 (Staphylococcus carnosus (strain TM300)).